Here is a 330-residue protein sequence, read N- to C-terminus: Exostosin-like 2 (330 aa).

The Cytoplasmic portion of the chain corresponds to 1–21; it reads MMRGCHICKLPGRVMGIRVLR. A helical; Signal-anchor for type II membrane protein membrane pass occupies residues 22–42; the sequence is FSLVVILVLLLVAGALTNLLP. Over 43-330 the chain is Lumenal; it reads NIKEDKMLTL…FPYANHKSKM (288 aa). A UDP-N-acetyl-alpha-D-galactosamine-binding site is contributed by Gln72. Position 72 (Gln72) interacts with UDP-N-acetyl-alpha-D-glucosamine. Asn75 carries an N-linked (GlcNAc...) asparagine glycan. Residues Arg76, Asn101, Asn130, Arg135, Asp151, Asp152, Asp153, and Asp245 each coordinate UDP-N-acetyl-alpha-D-galactosamine. The UDP-N-acetyl-alpha-D-glucosamine site is built by Arg76, Asn101, Asn130, Arg135, Asp151, Asp152, Asp153, Asp245, Asp246, and Arg293. Asp153 is a Mn(2+) binding site. A disulfide bond links Cys244 and Cys296. Asp246 is a catalytic residue. Residue Arg293 coordinates UDP-N-acetyl-alpha-D-galactosamine.

This sequence belongs to the glycosyltransferase 47 family. Requires Mn(2+) as cofactor.

Its subcellular location is the endoplasmic reticulum membrane. It catalyses the reaction 3-O-(beta-D-GlcA-(1-&gt;3)-beta-D-Gal-(1-&gt;3)-beta-D-Gal-(1-&gt;4)-beta-D-Xyl)-L-seryl-[protein] + UDP-N-acetyl-alpha-D-glucosamine = 3-O-(alpha-D-GlcNAc-(1-&gt;4)-beta-D-GlcA-(1-&gt;3)-beta-D-Gal-(1-&gt;3)-beta-D-Gal-(1-&gt;4)-beta-D-Xyl)-L-seryl-[protein] + UDP + H(+). Glycosyltransferase required for the biosynthesis of heparan-sulfate and responsible for the alternating addition of beta-1-4-linked glucuronic acid (GlcA) and alpha-1-4-linked N-acetylglucosamine (GlcNAc) units to nascent heparan sulfate chains. This chain is Exostosin-like 2 (Extl2), found in Mus musculus (Mouse).